The sequence spans 423 residues: Pentamidine resistance factor, mitochondrial (423 aa).

The helical transmembrane segment at 199 to 219 (PVFFTLVFIFEEVSVLIFTFF) threads the bilayer.

Interacts with COX18. This interaction may be essential for its insertion into mitochondrial inner membrane.

Its subcellular location is the mitochondrion inner membrane. Probably involved in mitochondrial export. Confers resistance to the anti-pneumocystis carinii drug pentamidine. May act by the removal of pentamidine, or its damage targets, from the matrix by an active-transport mechanism. The polypeptide is Pentamidine resistance factor, mitochondrial (PNT1) (Saccharomyces cerevisiae (strain ATCC 204508 / S288c) (Baker's yeast)).